An 821-amino-acid polypeptide reads, in one-letter code: Xylosyltransferase 1 (821 aa).

The tract at residues 1–121 (YFSHRPKEKV…PETKSDQVPK (121 aa)) is disordered. Over 1–821 (YFSHRPKEKV…GAVKPDGRLR (821 aa)) the chain is Lumenal. Positions 9–25 (KVRTDSNNENSVPKDFE) are enriched in basic and acidic residues. A compositionally biased stretch (polar residues) spans 27–36 (VDNSNFAPRT). Basic and acidic residues-rich tracts occupy residues 41–58 (HQPELAKKPLSRQKERLQ) and 76–87 (GPKEVLPPREKA). An N-linked (GlcNAc...) asparagine glycan is attached at Asn-90. Disulfide bonds link Cys-122–Cys-150, Cys-166–Cys-407, Cys-426–Cys-439, and Cys-428–Cys-437. UDP-alpha-D-xylose contacts are provided by residues Val-198, Asp-226, and 255–257 (TIW). Asn-286 carries an N-linked (GlcNAc...) asparagine glycan. Position 359–360 (359–360 (DW)) interacts with UDP-alpha-D-xylose. UDP-alpha-D-xylose contacts are provided by residues Ser-440 and 463 to 464 (RK). Intrachain disulfides connect Cys-540-Cys-789 and Cys-782-Cys-795. N-linked (GlcNAc...) asparagine glycosylation is present at Asn-642. The tract at residues 801 to 821 (SSFSPDPKSELGAVKPDGRLR) is disordered.

It belongs to the glycosyltransferase 14 family. XylT subfamily. In terms of assembly, monomer. Requires a divalent metal cation as cofactor. Contains 7 disulfide bonds. Post-translationally, N-glycosylated.

It localises to the golgi apparatus membrane. The enzyme catalyses UDP-alpha-D-xylose + L-seryl-[protein] = 3-O-(beta-D-xylosyl)-L-seryl-[protein] + UDP + H(+). Its pathway is glycan metabolism; chondroitin sulfate biosynthesis. It participates in glycan metabolism; heparan sulfate biosynthesis. In terms of biological role, catalyzes the first step in the biosynthesis of chondroitin sulfate and dermatan sulfate proteoglycans, such as DCN. Transfers D-xylose from UDP-D-xylose to specific serine residues of the core protein. Required for normal maturation of chondrocytes during bone development, normal onset of ossification and normal embryonic and postnatal skeleton development, especially of the long bones. The protein is Xylosyltransferase 1 (Xylt1) of Rattus norvegicus (Rat).